The chain runs to 803 residues: Phenylalanine--tRNA ligase beta subunit (803 aa).

The 112-residue stretch at 39–150 (AKVLAPFTIA…ADAPVGAAYA (112 aa)) folds into the tRNA-binding domain. A B5 domain is found at 400–475 (ADDKIIDFPL…RIVGVDKVPL (76 aa)). Mg(2+)-binding residues include D453, D459, E462, and E463. Positions 709 to 802 (SAFHPVSRDF…VTKKTGGSLR (94 aa)) constitute an FDX-ACB domain.

It belongs to the phenylalanyl-tRNA synthetase beta subunit family. Type 1 subfamily. In terms of assembly, tetramer of two alpha and two beta subunits. The cofactor is Mg(2+).

Its subcellular location is the cytoplasm. The catalysed reaction is tRNA(Phe) + L-phenylalanine + ATP = L-phenylalanyl-tRNA(Phe) + AMP + diphosphate + H(+). This is Phenylalanine--tRNA ligase beta subunit from Rhodopseudomonas palustris (strain ATCC BAA-98 / CGA009).